Reading from the N-terminus, the 337-residue chain is Glyceraldehyde-3-phosphate dehydrogenase 1, cytosolic (337 aa).

NAD(+) contacts are provided by residues 13–14 (RI), aspartate 35, and arginine 82. Residues 153 to 155 (SCT), threonine 184, 213 to 214 (TG), and arginine 236 contribute to the D-glyceraldehyde 3-phosphate site. Cysteine 154 functions as the Nucleophile in the catalytic mechanism. Asparagine 318 serves as a coordination point for NAD(+).

This sequence belongs to the glyceraldehyde-3-phosphate dehydrogenase family. In terms of assembly, homotetramer. Phosphorylated after gibberellin treatment.

The protein resides in the cytoplasm. It catalyses the reaction D-glyceraldehyde 3-phosphate + phosphate + NAD(+) = (2R)-3-phospho-glyceroyl phosphate + NADH + H(+). It participates in carbohydrate degradation; glycolysis; pyruvate from D-glyceraldehyde 3-phosphate: step 1/5. In terms of biological role, key enzyme in glycolysis that catalyzes the first step of the pathway by converting D-glyceraldehyde 3-phosphate (G3P) into 3-phospho-D-glyceroyl phosphate. Essential for the maintenance of cellular ATP levels and carbohydrate metabolism. The chain is Glyceraldehyde-3-phosphate dehydrogenase 1, cytosolic (GAPC1) from Oryza sativa subsp. japonica (Rice).